Reading from the N-terminus, the 607-residue chain is Serum albumin (607 aa).

A signal peptide spans 1 to 16 (MKWTILTALLIISAES). The propeptide occupies 17–20 (KNLY). 3 consecutive Albumin domains span residues 19–209 (LYKR…TQLK), 210–401 (KALH…HVLA), and 403–600 (AIKE…ILIE). Histidine 27 lines the Cu cation pocket. Intrachain disulfides connect cysteine 77–cysteine 86, cysteine 99–cysteine 115, cysteine 114–cysteine 125, cysteine 147–cysteine 192, cysteine 191–cysteine 200, cysteine 223–cysteine 269, cysteine 268–cysteine 276, cysteine 288–cysteine 302, cysteine 301–cysteine 312, cysteine 339–cysteine 384, cysteine 383–cysteine 392, cysteine 415–cysteine 461, cysteine 460–cysteine 471, cysteine 484–cysteine 500, cysteine 499–cysteine 510, cysteine 537–cysteine 582, and cysteine 581–cysteine 590. Residues histidine 270 and aspartate 272 each coordinate Zn(2+). Aspartate 272 and glutamate 275 together coordinate Ca(2+).

This sequence belongs to the ALB/AFP/VDB family. In terms of tissue distribution, plasma. In the skin, widely distributed around the membranes of epithelial layer cells and within the stratum spongiosum of the dermis (at protein level).

It is found in the secreted. Functionally, serum albumin, the main protein of plasma, has a good binding capacity for water, Ca(2+), Na(+), K(+), fatty acids, hormones, bilirubin and drugs. Its main function is the regulation of the colloidal osmotic pressure of blood. Potent inhibitor of trypsin but has no inhibitory effect on thrombin, chymotrypsin, elastase and subtilisin. This is Serum albumin from Bombina maxima (Giant fire-bellied toad).